The primary structure comprises 296 residues: Chronophin (296 aa).

The active-site Nucleophile is the Asp25. 2 residues coordinate Mg(2+): Asp25 and Asp27. Asp27 serves as the catalytic Proton donor. Substrate is bound by residues 58–60 (SNN), His182, and Lys213. Position 238 (Asp238) interacts with Mg(2+).

The protein belongs to the HAD-like hydrolase superfamily. In terms of assembly, homodimer. Mg(2+) serves as cofactor. In terms of tissue distribution, ubiquitously expressed (at protein level). Highly expressed in all the regions of central nerve system except the spinal cord. Also expressed at high level in liver and testis. In fetus, it is weakly expressed in all organs except brain.

The protein localises to the cytoplasm. The protein resides in the cytosol. It is found in the cytoskeleton. It localises to the cell projection. Its subcellular location is the ruffle membrane. The protein localises to the lamellipodium membrane. The protein resides in the cell membrane. It carries out the reaction pyridoxal 5'-phosphate + H2O = pyridoxal + phosphate. The enzyme catalyses pyridoxine 5'-phosphate + H2O = pyridoxine + phosphate. The catalysed reaction is pyridoxamine + phosphate = pyridoxamine 5'-phosphate + H2O. It catalyses the reaction O-phospho-L-seryl-[protein] + H2O = L-seryl-[protein] + phosphate. Inhibited by NaF, Zn(2+), Ca(2+), Mn(2+) and EDTA. Functions as a pyridoxal phosphate (PLP) phosphatase, which also catalyzes the dephosphorylation of pyridoxine 5'-phosphate (PNP) and pyridoxamine 5'-phosphate (PMP), with order of substrate preference PLP &gt; PNP &gt; PMP and therefore plays a role in vitamin B6 metabolism. Also functions as a protein serine phosphatase that specifically dephosphorylates 'Ser-3' in proteins of the actin-depolymerizing factor (ADF)/cofilin family like CFL1 and DSTN. Thereby, regulates cofilin-dependent actin cytoskeleton reorganization, being required for normal progress through mitosis and normal cytokinesis. Does not dephosphorylate phosphothreonines in LIMK1. Does not dephosphorylate peptides containing phosphotyrosine. This chain is Chronophin, found in Homo sapiens (Human).